The sequence spans 110 residues: MLAAAPLLLASGNGFATTGPAAKPAVKPVTESRGEILSLSCAGCHGTDGNSSSVIPSIYGKSPEYIETALIDFKNGSRTSTVMGRHAKGYTGEEIHLIAEYFGNLSKKNH.

The N-terminal stretch at 1–16 is a signal peptide; the sequence is MLAAAPLLLASGNGFA. Positions 41, 44, 45, and 83 each coordinate heme c.

As to quaternary structure, dimer of one cytochrome and one flavoprotein. Post-translationally, binds 1 heme c group covalently per subunit.

The protein resides in the periplasm. Functionally, monoheme cytochrome that function as the electron transport subunit of sulfide dehydrogenase. In Chlorobaculum tepidum (strain ATCC 49652 / DSM 12025 / NBRC 103806 / TLS) (Chlorobium tepidum), this protein is Cytochrome subunit of sulfide dehydrogenase (fccA).